The primary structure comprises 819 residues: Lysine-specific demethylase JMJ18 (819 aa).

Residues 1 to 39 (MENPPLESEIKEDMSLKNHPPDKDKDKDTIMEQPSSPRH) are disordered. Over residues 8–30 (SEIKEDMSLKNHPPDKDKDKDTI) the composition is skewed to basic and acidic residues. Positions 59 to 100 (APVFTPSLEEFVDPLAYIEKIRPLAEPYGICRIIPPSTWKPP) constitute a JmjN domain. Residues 120–171 (TVDLLQNREPMKKKPKSRKRKRRRNSRMGSSKRRSGSSPAESTSSPEAEEKF) are disordered. The Nuclear localization signal motif lies at 130–137 (MKKKPKSR). Basic residues predominate over residues 130 to 154 (MKKKPKSRKRKRRRNSRMGSSKRRS). Residues 155–165 (GSSPAESTSSP) show a composition bias toward low complexity. Positions 261-427 (QYTLSGWNLN…HGQNAVELYS (167 aa)) constitute a JmjC domain. Fe cation contacts are provided by His-307, Glu-309, and His-395. Cys-519, Cys-522, Cys-533, Cys-535, Cys-542, His-545, Cys-550, and Cys-552 together coordinate Zn(2+). Residues 519-571 (CFSCFYDLHLSASGCKCSPEEYACLKHADDLCSCDVKDGFILLRYTMDELSSL) form a C5HC2 zinc finger. Residues 644 to 702 (ASENLGVSVEPINLGFLIFGKLWCNKYAIFPKGFRSRVKFYNVLDPTRMSNYISEVLDA) form the FYR N-terminal domain. One can recognise an FYR C-terminal domain in the interval 704–788 (LMGPLFRVTL…HRLVEYWNHK (85 aa)).

Belongs to the JARID1 histone demethylase family. Fe(2+) is required as a cofactor. As to expression, expressed in vascular tissues of roots, cotyledons, leaves and flowers. Expressed predominantly in phloem companion cells of roots. Present in inflorescences, roots, siliques, leaves and stems.

It localises to the nucleus. It carries out the reaction N(6),N(6),N(6)-trimethyl-L-lysyl(4)-[histone H3] + 2-oxoglutarate + O2 = N(6),N(6)-dimethyl-L-lysyl(4)-[histone H3] + formaldehyde + succinate + CO2. It catalyses the reaction N(6),N(6)-dimethyl-L-lysyl(4)-[histone H3] + 2-oxoglutarate + O2 = N(6)-methyl-L-lysyl(4)-[histone H3] + formaldehyde + succinate + CO2. Histone demethylase that demethylates 'Lys-4' (H3K4me) of histone H3 with a specific activity for H3K4me3 and H3K4me2. No activity on H3K9me3/2, H3K27me3/2 and H3K36me3/2. Involved in the control of flowering time by demethylating H3K4me3 at the FLC locus and repressing its expression. The repression of FLC level and reduction in H3K4me3 at the FLC locus results in induction of the flowering activator FT, which is a downstream target of FLC. The chain is Lysine-specific demethylase JMJ18 from Arabidopsis thaliana (Mouse-ear cress).